A 180-amino-acid chain; its full sequence is Acireductone dioxygenase (180 aa).

Fe(2+)-binding residues include His97, His99, Glu103, and His141. Ni(2+) contacts are provided by His97, His99, Glu103, and His141.

This sequence belongs to the acireductone dioxygenase (ARD) family. In terms of assembly, monomer. It depends on Fe(2+) as a cofactor. Requires Ni(2+) as cofactor.

The enzyme catalyses 1,2-dihydroxy-5-(methylsulfanyl)pent-1-en-3-one + O2 = 3-(methylsulfanyl)propanoate + CO + formate + 2 H(+). The catalysed reaction is 1,2-dihydroxy-5-(methylsulfanyl)pent-1-en-3-one + O2 = 4-methylsulfanyl-2-oxobutanoate + formate + 2 H(+). It participates in amino-acid biosynthesis; L-methionine biosynthesis via salvage pathway; L-methionine from S-methyl-5-thio-alpha-D-ribose 1-phosphate: step 5/6. Catalyzes 2 different reactions between oxygen and the acireductone 1,2-dihydroxy-3-keto-5-methylthiopentene (DHK-MTPene) depending upon the metal bound in the active site. Fe-containing acireductone dioxygenase (Fe-ARD) produces formate and 2-keto-4-methylthiobutyrate (KMTB), the alpha-ketoacid precursor of methionine in the methionine recycle pathway. Ni-containing acireductone dioxygenase (Ni-ARD) produces methylthiopropionate, carbon monoxide and formate, and does not lie on the methionine recycle pathway. In Enterobacter sp. (strain 638), this protein is Acireductone dioxygenase.